The chain runs to 175 residues: Regenerating islet-derived protein 3-beta (175 aa).

A signal peptide spans 1–26 (MLHRLAFPVMSWMLLSCLMLLSQVQG). Positions 27-37 (EDSPKKIPSAR) are excised as a propeptide. Disulfide bonds link C40–C51, C68–C171, and C146–C163. Residues 47-172 (YGSYCYALFQ…CEVKLPYVCK (126 aa)) form the C-type lectin domain. Residue H107 coordinates Zn(2+). The short motif at 114 to 116 (EPN) is the EPN element. E121 is a Zn(2+) binding site.

As to quaternary structure, forms a hexameric membrane-permeabilizing oligomeric pore on membrane phospholipids. The hexamer is formed by three dimers related by helical symmetry. Forms filaments, filamentation traps pore complexes and limits damage to host cells. Interacts with EXTL3. Post-translationally, proteolytic processing by trypsin removes an inhibitory N-terminal propeptide and is essential for peptidoglycan binding and antibacterial activity. In terms of tissue distribution, constitutively expressed in intestine.

It localises to the secreted. Its activity is regulated as follows. Lipopolysaccharide inhibits pore-forming activity, explaining why is bactericidal for Gram-positive but not Gram-negative bacteria. In terms of biological role, bactericidal C-type lectin which acts against several intestinal Gram-positive bacteria and Gram-negative bacteria. Lacks antibacterial activity against S.typhimurium. May play a role in protection against infection with S.enteritidis by inhibiting its translocation from the gut lumen into intestinal tissues and further extraintestinal tissues. Functionally, acts as a hormone in response to different stimuli. Secreted by different cell types to activate its receptor EXTL3 and induce cell specific signaling pathways. In pancreas, is able stimulate cell proliferation. The sequence is that of Regenerating islet-derived protein 3-beta from Rattus norvegicus (Rat).